Reading from the N-terminus, the 84-residue chain is Cell division topological specificity factor (84 aa).

The protein belongs to the MinE family.

Prevents the cell division inhibition by proteins MinC and MinD at internal division sites while permitting inhibition at polar sites. This ensures cell division at the proper site by restricting the formation of a division septum at the midpoint of the long axis of the cell. This Granulibacter bethesdensis (strain ATCC BAA-1260 / CGDNIH1) protein is Cell division topological specificity factor.